Consider the following 436-residue polypeptide: UPF0597 protein DP0591 (436 aa).

Belongs to the UPF0597 family.

In Desulfotalea psychrophila (strain LSv54 / DSM 12343), this protein is UPF0597 protein DP0591.